We begin with the raw amino-acid sequence, 123 residues long: Small ribosomal subunit protein uS12 (123 aa).

A disordered region spans residues 1–25 (MPTINQLIRKRRKSSLARKKSPALQ). Basic residues predominate over residues 8 to 21 (IRKRRKSSLARKKS). Residue aspartate 89 is modified to 3-methylthioaspartic acid.

It belongs to the universal ribosomal protein uS12 family. As to quaternary structure, part of the 30S ribosomal subunit. Contacts proteins S8 and S17. May interact with IF1 in the 30S initiation complex.

In terms of biological role, with S4 and S5 plays an important role in translational accuracy. Functionally, interacts with and stabilizes bases of the 16S rRNA that are involved in tRNA selection in the A site and with the mRNA backbone. Located at the interface of the 30S and 50S subunits, it traverses the body of the 30S subunit contacting proteins on the other side and probably holding the rRNA structure together. The combined cluster of proteins S8, S12 and S17 appears to hold together the shoulder and platform of the 30S subunit. The chain is Small ribosomal subunit protein uS12 from Chlamydia pneumoniae (Chlamydophila pneumoniae).